The sequence spans 320 residues: MTSAPLAARLRDVAGPLFFPVTAFGPDGAVDLAVFRAHVRAGIDAGAAAVFACCGTGEFHALTPEEFRLAVGAAVEESAGQVPVLAGAGYGTALAVQYARAAEEAGADGLLAMPPYLVVADQQGLLHHYAALAAATGLETIVYQRDNAVFTPETVVALARTPGVIGLKDGHGDLDLMQRIVSAVRTHRPGGDFLYFNGLPTAELTGPAYRGIGVTLYSSAVFAFAPDIALAFYRALDSGDDALVDGLLDHFYRPLVELRAQGRGYAVSLVKAGVRLQGLDVGEVRTPLTEPTAAHVKDLIEIIASGRALLAEHAAAGGGA.

Belongs to the DapA family.

It catalyses the reaction 5-dehydro-4-deoxy-D-glucarate + H(+) = 2,5-dioxopentanoate + CO2 + H2O. Its pathway is carbohydrate acid metabolism; D-glucarate degradation; 2,5-dioxopentanoate from D-glucarate: step 2/2. The chain is Probable 5-dehydro-4-deoxyglucarate dehydratase from Streptomyces griseus subsp. griseus (strain JCM 4626 / CBS 651.72 / NBRC 13350 / KCC S-0626 / ISP 5235).